A 335-amino-acid chain; its full sequence is Casein kinase I (335 aa).

The Protein kinase domain maps to 9–278 (YRLGRKIGSG…LRRLFKDLFF (270 aa)). Residues 15–23 (IGSGSFGDI) and K38 contribute to the ATP site. D128 serves as the catalytic Proton acceptor. The tract at residues 304–335 (RSMVNQGAESGNQWRRDASGRDPLGRLPQLEP) is disordered. Residues 305–316 (SMVNQGAESGNQ) are compositionally biased toward polar residues. The span at 317-327 (WRRDASGRDPL) shows a compositional bias: basic and acidic residues.

This sequence belongs to the protein kinase superfamily. CK1 Ser/Thr protein kinase family. Casein kinase I subfamily.

The enzyme catalyses L-seryl-[protein] + ATP = O-phospho-L-seryl-[protein] + ADP + H(+). It carries out the reaction L-threonyl-[protein] + ATP = O-phospho-L-threonyl-[protein] + ADP + H(+). Casein kinases are operationally defined by their preferential utilization of acidic proteins such as caseins as substrates. It can phosphorylate a large number of proteins. This chain is Casein kinase I, found in Eimeria tenella (Coccidian parasite).